The chain runs to 183 residues: Ferritin light chain 1 (183 aa).

Positions 7-156 (QNYSTEVEAA…NHLTNLRRVA (150 aa)) constitute a Ferritin-like diiron domain. Fe cation contacts are provided by Glu54, Glu57, Glu58, Glu61, and Glu64.

It belongs to the ferritin family. As to quaternary structure, oligomer of 24 subunits. There are two types of subunits: L (light) chain and H (heavy) chain. The major chain can be light or heavy, depending on the species and tissue type. The functional molecule forms a roughly spherical shell with a diameter of 12 nm and contains a central cavity into which the insoluble mineral iron core is deposited. Interacts with NCOA4.

Its subcellular location is the cytoplasm. The protein localises to the cytoplasmic vesicle. The protein resides in the autophagosome. It localises to the autolysosome. Its function is as follows. Stores iron in a soluble, non-toxic, readily available form. Important for iron homeostasis. Iron is taken up in the ferrous form and deposited as ferric hydroxides after oxidation. Also plays a role in delivery of iron to cells. Mediates iron uptake in capsule cells of the developing kidney. Degraded to release iron upon autophagy activation by nutrient starvation. The polypeptide is Ferritin light chain 1 (Ftl1) (Mus musculus (Mouse)).